A 173-amino-acid chain; its full sequence is Crossover junction endodeoxyribonuclease RuvC (173 aa).

Active-site residues include Asp-8, Glu-67, and Asp-139. Mg(2+)-binding residues include Asp-8, Glu-67, and Asp-139.

It belongs to the RuvC family. As to quaternary structure, homodimer which binds Holliday junction (HJ) DNA. The HJ becomes 2-fold symmetrical on binding to RuvC with unstacked arms; it has a different conformation from HJ DNA in complex with RuvA. In the full resolvosome a probable DNA-RuvA(4)-RuvB(12)-RuvC(2) complex forms which resolves the HJ. The cofactor is Mg(2+).

The protein localises to the cytoplasm. It catalyses the reaction Endonucleolytic cleavage at a junction such as a reciprocal single-stranded crossover between two homologous DNA duplexes (Holliday junction).. Its function is as follows. The RuvA-RuvB-RuvC complex processes Holliday junction (HJ) DNA during genetic recombination and DNA repair. Endonuclease that resolves HJ intermediates. Cleaves cruciform DNA by making single-stranded nicks across the HJ at symmetrical positions within the homologous arms, yielding a 5'-phosphate and a 3'-hydroxyl group; requires a central core of homology in the junction. The consensus cleavage sequence is 5'-(A/T)TT(C/G)-3'. Cleavage occurs on the 3'-side of the TT dinucleotide at the point of strand exchange. HJ branch migration catalyzed by RuvA-RuvB allows RuvC to scan DNA until it finds its consensus sequence, where it cleaves and resolves the cruciform DNA. The polypeptide is Crossover junction endodeoxyribonuclease RuvC (Pseudoalteromonas atlantica (strain T6c / ATCC BAA-1087)).